Here is a 112-residue protein sequence, read N- to C-terminus: Putative pterin-4-alpha-carbinolamine dehydratase (112 aa).

This sequence belongs to the pterin-4-alpha-carbinolamine dehydratase family.

The catalysed reaction is (4aS,6R)-4a-hydroxy-L-erythro-5,6,7,8-tetrahydrobiopterin = (6R)-L-erythro-6,7-dihydrobiopterin + H2O. This is Putative pterin-4-alpha-carbinolamine dehydratase from Shewanella putrefaciens (strain CN-32 / ATCC BAA-453).